The following is a 512-amino-acid chain: Oryzalexin E synthase (512 aa).

Residues 6 to 26 (SELWMTAVATCMSLLLYLTIL) traverse the membrane as a helical segment. Cys-452 lines the heme pocket.

It belongs to the cytochrome P450 family. Heme serves as cofactor.

It localises to the membrane. It catalyses the reaction ent-sandaracopimaradien-3beta-ol + reduced [NADPH--hemoprotein reductase] + O2 = oryzalexin E + oxidized [NADPH--hemoprotein reductase] + H2O + H(+). Its function is as follows. Enzyme of the diterpenoid metabolism involved in the biosynthesis of the oryzalexin class of phytoalexins. Can use ent-sandaracopimaradien and syn-stemodene as substrates, but no activity with syn-stemoden-19-oic acid. Hydroxylates 3-alpha-hydroxy-ent-sandaracopimaradiene at C-9-beta, resulting in a 3-alpha,9-beta-diol corresponding to oryzalexins E. This chain is Oryzalexin E synthase, found in Oryza sativa subsp. japonica (Rice).